We begin with the raw amino-acid sequence, 110 residues long: Dermcidin (110 aa).

Positions 1–19 are cleaved as a signal peptide; the sequence is MRFMTLLFLTALAGALVCA. The interval 24-70 is disordered; the sequence is AASAPGSGNPCHEASAAQKENAGEDPGLARQAPKPRKQRSSLLEKGL. Residues Ser-30 and Ser-38 are each glycosylated (O-linked (Xyl...) (chondroitin sulfate) serine). Positions 50–62 are excised as a propeptide; sequence GLARQAPKPRKQR. A helical membrane pass occupies residues 64 to 108; the sequence is SLLEKGLDGAKKAVGGLGKLGKDAVEDLESVGKGAVHDVKDVLDS. Glu-67 provides a ligand contact to Zn(2+). The residue at position 68 (Lys-68) is an N6-acetyllysine. Asp-71, Asp-86, Asp-90, His-100, and Asp-104 together coordinate Zn(2+). Residue Leu-110 is a propeptide.

Homohexamer. Mn(2+) is required as a cofactor. Requires Zn(2+) as cofactor. As to expression, detected in urine (at protein level). Constitutively expressed in eccrine sweat gland cells (at protein level). Secreted into the sweat at a concentration of 1-10 micrograms/ml.

It is found in the secreted. Its subcellular location is the membrane. Its function is as follows. Found in sweat, has an antimicrobial activity during early bacterial colonization. The secreted peptide assembles into homohexameric complexes that can associate with and also insert into pathogen membranes. Once inserted in bacteria membranes forms anion channels probably altering the transmembrane potential essential for bacterial survival. Highly effective against E.coli, E.faecalis, S.aureus and C.albicans. Optimal pH and salt concentration resemble the conditions in sweat. Also exhibits proteolytic activity, cleaving on the C-terminal side of Arg and, to a lesser extent, Lys residues. In terms of biological role, promotes survival of neurons and displays phosphatase activity. It may bind IgG. In Homo sapiens (Human), this protein is Dermcidin.